The sequence spans 139 residues: Putative nickel-responsive regulator (139 aa).

Residues histidine 76, histidine 87, histidine 89, and cysteine 95 each coordinate Ni(2+).

It belongs to the transcriptional regulatory CopG/NikR family. Ni(2+) is required as a cofactor.

Functionally, transcriptional regulator. The sequence is that of Putative nickel-responsive regulator from Rhodopseudomonas palustris (strain HaA2).